We begin with the raw amino-acid sequence, 455 residues long: DENN domain-containing protein 11 (455 aa).

A disordered region spans residues 1-59 (MVEQGDAAPLLRWAEGPAVSVPQDPALQAGGWVRGGSGEGRVAAEAPRRREPDEPAPPE). Val-2 is modified (N-acetylvaline). The region spanning 15–187 (EGPAVSVPQD…QLEMPGHYSH (173 aa)) is the uDENN domain. Omega-N-methylarginine is present on Arg-41. In terms of domain architecture, cDENN spans 214–362 (WLPSIHRYMY…INSADREKYR (149 aa)). One can recognise a dDENN domain in the interval 364–455 (LNEQRQMLLY…MLVIDNPCCP (92 aa)).

The protein belongs to the DENND11 family.

In terms of biological role, probable guanine nucleotide exchange factor (GEF). May promote the exchange of GDP to GTP, converting inactive GDP-bound small GTPases into their active GTP-bound form. May play a role in neuritogenesis, as well as in neuronal recovery and/or restructuring in the hippocampus following transient cerebral ischemia. This Mus musculus (Mouse) protein is DENN domain-containing protein 11 (Dennd11).